We begin with the raw amino-acid sequence, 372 residues long: GDP-mannose 4,6-dehydratase (372 aa).

NADP(+) contacts are provided by residues Gly9 to Asp14, Asp64 to Leu65, Leu86 to Ser90, and Tyr101. The active site involves Thr133. Residues Glu135 and Tyr157 each act as nucleophile in the active site. Residues Lys161, His187, and Arg192 each coordinate NADP(+).

The protein belongs to the NAD(P)-dependent epimerase/dehydratase family. GDP-mannose 4,6-dehydratase subfamily. Requires NADP(+) as cofactor.

It carries out the reaction GDP-alpha-D-mannose = GDP-4-dehydro-alpha-D-rhamnose + H2O. Its pathway is nucleotide-sugar biosynthesis; GDP-L-fucose biosynthesis via de novo pathway; GDP-L-fucose from GDP-alpha-D-mannose: step 1/2. Functionally, catalyzes the conversion of GDP-D-mannose to GDP-4-dehydro-6-deoxy-D-mannose. This chain is GDP-mannose 4,6-dehydratase, found in Vibrio cholerae.